The sequence spans 371 residues: Cysteine proteinase EP-B 1 (371 aa).

The signal sequence occupies residues 1 to 28; it reads MGLLSKKLLVASMVAAVLAVAAVELCSA. Residues 29–133 constitute a propeptide, activation peptide; the sequence is IPMEDKDLES…FMYAALNVSD (105 aa). An N-linked (GlcNAc...) asparagine glycan is attached at asparagine 130. 3 disulfides stabilise this stretch: cysteine 155-cysteine 197, cysteine 189-cysteine 230, and cysteine 291-cysteine 343. Residue cysteine 158 is part of the active site. Active-site residues include histidine 297 and asparagine 318.

The protein belongs to the peptidase C1 family.

The polypeptide is Cysteine proteinase EP-B 1 (Hordeum vulgare (Barley)).